The chain runs to 602 residues: Elongation factor 4 (602 aa).

The tr-type G domain occupies 2–184; that stretch reads NHIRNFSIIA…LIVAKVPAPR (183 aa). Residues 14 to 19 and 131 to 134 contribute to the GTP site; these read DHGKST and NKMD.

This sequence belongs to the TRAFAC class translation factor GTPase superfamily. Classic translation factor GTPase family. LepA subfamily.

The protein localises to the cell inner membrane. It catalyses the reaction GTP + H2O = GDP + phosphate + H(+). Required for accurate and efficient protein synthesis under certain stress conditions. May act as a fidelity factor of the translation reaction, by catalyzing a one-codon backward translocation of tRNAs on improperly translocated ribosomes. Back-translocation proceeds from a post-translocation (POST) complex to a pre-translocation (PRE) complex, thus giving elongation factor G a second chance to translocate the tRNAs correctly. Binds to ribosomes in a GTP-dependent manner. In Paracidovorax citrulli (strain AAC00-1) (Acidovorax citrulli), this protein is Elongation factor 4.